Reading from the N-terminus, the 245-residue chain is MTSSSSFSRFDGRAQDQMRAVKITRGFTSNPAGSVLVEFGNTRVMCTASVELGVPRFKRDSGEGWLTAEYAMLPAATAERNRRESMAGKVKGRTHEISRLIGRSLRAAVDLSQLGENTIAIDCDVLQADGGTRTASITGAYVALADAIKVLQERGVVPGSPLLAPVAAVSVGLVDGNVCLDLPYEEDSRADVDLNVVMTEHGEFVEIQGTGEETTFTRAQLNDMLDYAEKGCRELVAAQKAALGI.

Phosphate contacts are provided by residues R93 and 131 to 133; that span reads GTR.

The protein belongs to the RNase PH family. Homohexameric ring arranged as a trimer of dimers.

It carries out the reaction tRNA(n+1) + phosphate = tRNA(n) + a ribonucleoside 5'-diphosphate. In terms of biological role, phosphorolytic 3'-5' exoribonuclease that plays an important role in tRNA 3'-end maturation. Removes nucleotide residues following the 3'-CCA terminus of tRNAs; can also add nucleotides to the ends of RNA molecules by using nucleoside diphosphates as substrates, but this may not be physiologically important. Probably plays a role in initiation of 16S rRNA degradation (leading to ribosome degradation) during starvation. The protein is Ribonuclease PH of Corynebacterium glutamicum (strain R).